Here is a 928-residue protein sequence, read N- to C-terminus: Protein NETWORKED 2B (928 aa).

An NAB domain is found at 10–90; sequence YSWWWASHIR…ERYDHLSTEL (81 aa). The interval 108–144 is disordered; that stretch reads PLVDDDDDDDDDNPKKPPKHLHLIPSGTNIPQVPEVP. Acidic residues predominate over residues 110-119; the sequence is VDDDDDDDDD. Coiled coils occupy residues 207–309 and 360–445; these read SYEQ…AKKA and ALLK…VKMD. Disordered regions lie at residues 447–472 and 489–529; these read DVEG…SISN and KQSR…EERR. Over residues 457-468 the composition is skewed to acidic residues; the sequence is DIQEEDTVEDSD. Positions 489–506 are enriched in basic and acidic residues; that stretch reads KQSRDQESMQEEKSETRD. The stretch at 547-574 forms a coiled coil; sequence LLDEYSSVLRDYREVKRKLSEVEKKNRD. Residues 620 to 651 form a disordered region; it reads AESVSISHSSNSSFSMPPLPQRGDLKRASEQE. Low complexity predominate over residues 622–634; it reads SVSISHSSNSSFS. Positions 642 to 651 are enriched in basic and acidic residues; that stretch reads GDLKRASEQE.

This sequence belongs to the NET family.

In terms of biological role, plant-specific actin binding protein. May be part of a membrane-cytoskeletal adapter complex. This is Protein NETWORKED 2B from Arabidopsis thaliana (Mouse-ear cress).